The following is a 189-amino-acid chain: Photosystem I assembly protein Ycf4 (189 aa).

A run of 2 helical transmembrane segments spans residues 25–45 (SVYF…LAGL) and 62–82 (LVFI…SLAG).

Belongs to the Ycf4 family.

It localises to the cellular thylakoid membrane. In terms of biological role, seems to be required for the assembly of the photosystem I complex. The chain is Photosystem I assembly protein Ycf4 from Synechococcus sp. (strain JA-3-3Ab) (Cyanobacteria bacterium Yellowstone A-Prime).